Consider the following 548-residue polypeptide: Chaperonin GroEL (548 aa).

ATP-binding positions include 30–33 (TLGP), K51, 87–91 (DGTTT), G415, and D495.

It belongs to the chaperonin (HSP60) family. In terms of assembly, forms a cylinder of 14 subunits composed of two heptameric rings stacked back-to-back. Interacts with the co-chaperonin GroES.

It localises to the cytoplasm. It catalyses the reaction ATP + H2O + a folded polypeptide = ADP + phosphate + an unfolded polypeptide.. Together with its co-chaperonin GroES, plays an essential role in assisting protein folding. The GroEL-GroES system forms a nano-cage that allows encapsulation of the non-native substrate proteins and provides a physical environment optimized to promote and accelerate protein folding. The sequence is that of Chaperonin GroEL from Photorhabdus laumondii subsp. laumondii (strain DSM 15139 / CIP 105565 / TT01) (Photorhabdus luminescens subsp. laumondii).